Reading from the N-terminus, the 28-residue chain is Unknown protein from spot 154 of 2D-PAGE of etiolated coleoptile (28 aa).

The chain is Unknown protein from spot 154 of 2D-PAGE of etiolated coleoptile from Zea mays (Maize).